The sequence spans 289 residues: T-cell ecto-ADP-ribosyltransferase 2 (289 aa).

An N-terminal signal peptide occupies residues 1–20; that stretch reads MTSKIFKFFLTWWLTQQVTG. Cystine bridges form between Cys41-Cys246 and Cys141-Cys193. In terms of domain architecture, TR mART core spans 61–241; the sequence is EELKLEWEKA…IFLDSPERKK (181 aa). An N-linked (GlcNAc...) asparagine glycan is attached at Asn79. Tyr98, Arg146, and Gln164 together coordinate NAD(+). Arg146 is a catalytic residue. Ser167 is an active-site residue. Ser202 provides a ligand contact to NAD(+). The active site involves Glu209. Asn249 carries N-linked (GlcNAc...) asparagine glycosylation. Ser260 is lipidated: GPI-anchor amidated serine. Positions 261 to 289 are cleaved as a propeptide — removed in mature form; it reads ISGSRESCVSLFLVVLLGLLVQQLTLAEL.

This sequence belongs to the Arg-specific ADP-ribosyltransferase family. As to expression, expressed in spleen, intestine and thymus.

The protein resides in the cell membrane. The catalysed reaction is L-arginyl-[protein] + NAD(+) = N(omega)-(ADP-D-ribosyl)-L-arginyl-[protein] + nicotinamide + H(+). It catalyses the reaction NAD(+) + H2O = ADP-D-ribose + nicotinamide + H(+). Its function is as follows. Has both NAD(+) glycohydrolase and ADP-ribosyltransferase activity. The chain is T-cell ecto-ADP-ribosyltransferase 2 (Art2b) from Mus musculus (Mouse).